Here is a 207-residue protein sequence, read N- to C-terminus: Thiamine-phosphate synthase (207 aa).

Residues 36 to 40 and N68 contribute to the 4-amino-2-methyl-5-(diphosphooxymethyl)pyrimidine site; that span reads QLRMK. Residues D69 and D88 each contribute to the Mg(2+) site. S106 serves as a coordination point for 4-amino-2-methyl-5-(diphosphooxymethyl)pyrimidine. 2-[(2R,5Z)-2-carboxy-4-methylthiazol-5(2H)-ylidene]ethyl phosphate is bound at residue 132–134; sequence TNT. K135 provides a ligand contact to 4-amino-2-methyl-5-(diphosphooxymethyl)pyrimidine. Residues G162 and 182-183 contribute to the 2-[(2R,5Z)-2-carboxy-4-methylthiazol-5(2H)-ylidene]ethyl phosphate site; that span reads VS.

This sequence belongs to the thiamine-phosphate synthase family. It depends on Mg(2+) as a cofactor.

The catalysed reaction is 2-[(2R,5Z)-2-carboxy-4-methylthiazol-5(2H)-ylidene]ethyl phosphate + 4-amino-2-methyl-5-(diphosphooxymethyl)pyrimidine + 2 H(+) = thiamine phosphate + CO2 + diphosphate. It carries out the reaction 2-(2-carboxy-4-methylthiazol-5-yl)ethyl phosphate + 4-amino-2-methyl-5-(diphosphooxymethyl)pyrimidine + 2 H(+) = thiamine phosphate + CO2 + diphosphate. It catalyses the reaction 4-methyl-5-(2-phosphooxyethyl)-thiazole + 4-amino-2-methyl-5-(diphosphooxymethyl)pyrimidine + H(+) = thiamine phosphate + diphosphate. It participates in cofactor biosynthesis; thiamine diphosphate biosynthesis; thiamine phosphate from 4-amino-2-methyl-5-diphosphomethylpyrimidine and 4-methyl-5-(2-phosphoethyl)-thiazole: step 1/1. Functionally, condenses 4-methyl-5-(beta-hydroxyethyl)thiazole monophosphate (THZ-P) and 2-methyl-4-amino-5-hydroxymethyl pyrimidine pyrophosphate (HMP-PP) to form thiamine monophosphate (TMP). This Methanococcus maripaludis (strain DSM 14266 / JCM 13030 / NBRC 101832 / S2 / LL) protein is Thiamine-phosphate synthase.